The chain runs to 314 residues: tRNA pseudouridine synthase B (314 aa).

H43 provides a ligand contact to substrate. D48 (nucleophile) is an active-site residue. Y76, Y179, and L200 together coordinate substrate.

The protein belongs to the pseudouridine synthase TruB family. Type 1 subfamily.

It catalyses the reaction uridine(55) in tRNA = pseudouridine(55) in tRNA. In terms of biological role, responsible for synthesis of pseudouridine from uracil-55 in the psi GC loop of transfer RNAs. The sequence is that of tRNA pseudouridine synthase B from Shigella dysenteriae serotype 1 (strain Sd197).